Here is a 584-residue protein sequence, read N- to C-terminus: Cilia- and flagella-associated protein 184 (584 aa).

3 stretches are compositionally biased toward basic and acidic residues: residues 1 to 18 (MDSH…EEGL), 42 to 57 (PEPK…REPE), and 67 to 82 (SKAK…HVEV). The disordered stretch occupies residues 1–243 (MDSHYGDIEG…ASTEEFEWTA (243 aa)). Residues 119 to 146 (DKDEDEDEDEDEDEDEDEDEDEDEDEGE) show a composition bias toward acidic residues. A compositionally biased stretch (basic and acidic residues) spans 189 to 232 (AKEKARESLKKRDSEEIEGTDRERHKSTEEQLHPGEAKEEEKQK). Coiled-coil stretches lie at residues 317–470 (LAML…SNVQ) and 530–561 (LLGK…KRHH).

Belongs to the CFAP184 family. In terms of assembly, forms a complex with CFAP263; the interaction is required for functional activity in cilia.

It localises to the cell projection. Its subcellular location is the cilium. The protein resides in the cytoplasm. The protein localises to the cytoskeleton. It is found in the microtubule organizing center. It localises to the centrosome. Functionally, in complex with CFAP263, acts as a regulator of ciliary beating that connects radial spoke 3 (RS3) to the inner dynein arm (IDA) and the nexin-dynein regulatory complex (N-DRC). The complex is positioned parallel to N-DRC and forms a connection between the arch at the base of RS3, the IDA tail and N-DRC. The sequence is that of Cilia- and flagella-associated protein 184 (Cfap184) from Mus musculus (Mouse).